An 873-amino-acid polypeptide reads, in one-letter code: Serine/threonine-protein phosphatase 4 regulatory subunit 4 (873 aa).

HEAT repeat units follow at residues 213–251, 252–290, and 392–427; these read ILPL…TKSV, VLPE…RSQT, and NFHM…SKLL. The stretch at 686–720 forms a coiled coil; sequence QKKFYEKDLLDQEKEREELLLLEMEQLEKEKQQND. The segment covering 713–737 has biased composition (basic and acidic residues); it reads EKEKQQNDGRPMSDKMFEKKRRDTK. The disordered stretch occupies residues 713–766; it reads EKEKQQNDGRPMSDKMFEKKRRDTKTPTQSLPKNIPISVPGPSSVTPSTSKEIK. Low complexity predominate over residues 747-762; the sequence is IPISVPGPSSVTPSTS. The residue at position 775 (serine 775) is a Phosphoserine. A Phosphothreonine modification is found at threonine 797. Residues 822–858 show a composition bias toward polar residues; it reads TRNASSVPSSFSPNTPLPSTSRGTGNSVDPKSSGSKD. The interval 822–873 is disordered; it reads TRNASSVPSSFSPNTPLPSTSRGTGNSVDPKSSGSKDTQPRKATLKSRKSNP. Residues 864-873 show a composition bias toward basic residues; that stretch reads ATLKSRKSNP.

As to quaternary structure, serine/threonine-protein phosphatase 4 (PP4) occurs in different assemblies of the catalytic and one or more regulatory subunits. Component of the PP4 complex PPP4C-PPP4R4.

The protein resides in the cytoplasm. Its function is as follows. Putative regulatory subunit of serine/threonine-protein phosphatase 4. The polypeptide is Serine/threonine-protein phosphatase 4 regulatory subunit 4 (PPP4R4) (Homo sapiens (Human)).